The primary structure comprises 346 residues: Holliday junction branch migration complex subunit RuvB (346 aa).

The segment at 2 to 183 (TDDRIIGAGA…FGIVQRLEFY (182 aa)) is large ATPase domain (RuvB-L). ATP is bound by residues Ile-22, Arg-23, Gly-64, Lys-67, Thr-68, Thr-69, 130–132 (EDF), Arg-173, Tyr-183, and Arg-220. Thr-68 contributes to the Mg(2+) binding site. The interval 184 to 254 (SVEELTRIVR…VAQAAMKMLK (71 aa)) is small ATPAse domain (RuvB-S). Residues 257 to 346 (PEGFDELDRR…DLFAEVPDVG (90 aa)) are head domain (RuvB-H). DNA contacts are provided by Arg-293, Arg-312, and Arg-317.

This sequence belongs to the RuvB family. As to quaternary structure, homohexamer. Forms an RuvA(8)-RuvB(12)-Holliday junction (HJ) complex. HJ DNA is sandwiched between 2 RuvA tetramers; dsDNA enters through RuvA and exits via RuvB. An RuvB hexamer assembles on each DNA strand where it exits the tetramer. Each RuvB hexamer is contacted by two RuvA subunits (via domain III) on 2 adjacent RuvB subunits; this complex drives branch migration. In the full resolvosome a probable DNA-RuvA(4)-RuvB(12)-RuvC(2) complex forms which resolves the HJ.

Its subcellular location is the cytoplasm. The enzyme catalyses ATP + H2O = ADP + phosphate + H(+). Functionally, the RuvA-RuvB-RuvC complex processes Holliday junction (HJ) DNA during genetic recombination and DNA repair, while the RuvA-RuvB complex plays an important role in the rescue of blocked DNA replication forks via replication fork reversal (RFR). RuvA specifically binds to HJ cruciform DNA, conferring on it an open structure. The RuvB hexamer acts as an ATP-dependent pump, pulling dsDNA into and through the RuvAB complex. RuvB forms 2 homohexamers on either side of HJ DNA bound by 1 or 2 RuvA tetramers; 4 subunits per hexamer contact DNA at a time. Coordinated motions by a converter formed by DNA-disengaged RuvB subunits stimulates ATP hydrolysis and nucleotide exchange. Immobilization of the converter enables RuvB to convert the ATP-contained energy into a lever motion, pulling 2 nucleotides of DNA out of the RuvA tetramer per ATP hydrolyzed, thus driving DNA branch migration. The RuvB motors rotate together with the DNA substrate, which together with the progressing nucleotide cycle form the mechanistic basis for DNA recombination by continuous HJ branch migration. Branch migration allows RuvC to scan DNA until it finds its consensus sequence, where it cleaves and resolves cruciform DNA. The polypeptide is Holliday junction branch migration complex subunit RuvB (Stenotrophomonas maltophilia (strain K279a)).